Consider the following 364-residue polypeptide: Protein-glutamate methylesterase/protein-glutamine glutaminase 3 (364 aa).

The Response regulatory domain occupies 7–124; sequence RVLIVDDSAS…THALLEASAR (118 aa). Aspartate 58 carries the post-translational modification 4-aspartylphosphate. In terms of domain architecture, CheB-type methylesterase spans 167 to 358; that stretch reads PTTERLVCIG…REIMLWQDAK (192 aa). Catalysis depends on residues serine 178, histidine 204, and aspartate 300.

It belongs to the CheB family. Post-translationally, phosphorylated by CheA. Phosphorylation of the N-terminal regulatory domain activates the methylesterase activity.

It localises to the cytoplasm. The enzyme catalyses [protein]-L-glutamate 5-O-methyl ester + H2O = L-glutamyl-[protein] + methanol + H(+). It catalyses the reaction L-glutaminyl-[protein] + H2O = L-glutamyl-[protein] + NH4(+). Its function is as follows. Involved in chemotaxis. Part of a chemotaxis signal transduction system that modulates chemotaxis in response to various stimuli. Catalyzes the demethylation of specific methylglutamate residues introduced into the chemoreceptors (methyl-accepting chemotaxis proteins or MCP) by CheR. Also mediates the irreversible deamidation of specific glutamine residues to glutamic acid. This is Protein-glutamate methylesterase/protein-glutamine glutaminase 3 from Rhodopseudomonas palustris (strain BisB18).